A 219-amino-acid chain; its full sequence is Ribose-5-phosphate isomerase A (219 aa).

Substrate-binding positions include 28-31 (TGST), 81-84 (DGAD), and 94-97 (KGGG). Residue E103 is the Proton acceptor of the active site. K121 serves as a coordination point for substrate.

It belongs to the ribose 5-phosphate isomerase family. Homodimer.

The enzyme catalyses aldehydo-D-ribose 5-phosphate = D-ribulose 5-phosphate. It functions in the pathway carbohydrate degradation; pentose phosphate pathway; D-ribose 5-phosphate from D-ribulose 5-phosphate (non-oxidative stage): step 1/1. In terms of biological role, catalyzes the reversible conversion of ribose-5-phosphate to ribulose 5-phosphate. In Photobacterium profundum (strain SS9), this protein is Ribose-5-phosphate isomerase A.